We begin with the raw amino-acid sequence, 648 residues long: Spastin (648 aa).

Topologically, residues 1-40 are cytoplasmic; it reads MASTVALLRDSSDDRENFDDGETDCVQVGRKRKLTVFFYP. The segment at residues 41–61 is an intramembrane region (helical); it reads LLLVFWLLRWVFYQFFLVLCF. The Cytoplasmic segment spans residues 62 to 648; the sequence is VCRGFVPRRH…WNREFGDITV (587 aa). An MIT domain is found at 99 to 174; it reads HKKAFDFISK…EMARDRLDFL (76 aa). The disordered stretch occupies residues 188 to 346; sequence PWHGGVAPAQ…SQRSLLSSRV (159 aa). The span at 247 to 266 shows a compositional bias: low complexity; that stretch reads TGVTLRRQQQQQLGGVSTVS. An ATP-binding site is contributed by 414-421; the sequence is GPPGNGKT.

Belongs to the AAA ATPase family. Spastin subfamily. As to quaternary structure, homohexamer. The homohexamer is stabilized by ATP-binding. The homohexamer may adopt a ring conformation through which microtubules pass prior to being severed. Interacts with microtubules.

The protein resides in the membrane. The protein localises to the cytoplasm. Its subcellular location is the cytoskeleton. It is found in the microtubule organizing center. It localises to the centrosome. The catalysed reaction is n ATP + n H2O + a microtubule = n ADP + n phosphate + (n+1) alpha/beta tubulin heterodimers.. Functionally, ATP-dependent microtubule severing protein. Microtubule severing may promote reorganization of cellular microtubule arrays and the release of microtubules from the microtubule organizing center following nucleation. This chain is Spastin (spas), found in Ixodes scapularis (Black-legged tick).